Here is an 89-residue protein sequence, read N- to C-terminus: Small ribosomal subunit protein uS15 (89 aa).

The disordered stretch occupies residues 1–25 (MSLDTTEKQQLINTHQTHGTDTGSA). Positions 8 to 25 (KQQLINTHQTHGTDTGSA) are enriched in polar residues.

This sequence belongs to the universal ribosomal protein uS15 family. As to quaternary structure, part of the 30S ribosomal subunit. Forms a bridge to the 50S subunit in the 70S ribosome, contacting the 23S rRNA.

Functionally, one of the primary rRNA binding proteins, it binds directly to 16S rRNA where it helps nucleate assembly of the platform of the 30S subunit by binding and bridging several RNA helices of the 16S rRNA. Its function is as follows. Forms an intersubunit bridge (bridge B4) with the 23S rRNA of the 50S subunit in the ribosome. This Synechococcus sp. (strain CC9605) protein is Small ribosomal subunit protein uS15.